Reading from the N-terminus, the 521-residue chain is MAKIIEEMINKKGLLIDDYELYGNEIAKIKSIKKLNKKDSKLIVITSMNPNPAGEGKTTTAIGLVDALNKHGYKAIGALREPSMGPVFGMKGTGSGGGLSFLKPFDKINLHFSGDFHAITAANNLIVAVIENEIHNRSSMQIDSQKILIKRCLDVNDRSLRNIEYDINHQQTKSGFNITAASDLMALFCLAHDHKDFEDKLAQTIVAYNIVNQPIRICDLELTKAIMAILEDALYANLVRTNEDNPVFVHGGPFANIAHGCNSIIATKNALALGDYVVTECGFGSDLGLEKFMNIKMASLNLKPDLIGLVISLKSIAYHAQTNEKDYVKQGFANVLCHINHIKKYNVSFIVYINVNTNTDSEEDLLTLEKLLDEHQIEHARSYAYSYGSKKSEEITKKTITLTNQINDHELKLIYDIKDHLSYKLKKICENVYGADGYELSYEAKEQLNRYEHLDFYLCIAKTPYSISDDAKLLNNPKNFKIHIERFEINYAAKLIIAITTTIYRMPGLNKEPAAKNFVMK.

It belongs to the formate--tetrahydrofolate ligase family.

The enzyme catalyses (6S)-5,6,7,8-tetrahydrofolate + formate + ATP = (6R)-10-formyltetrahydrofolate + ADP + phosphate. The protein operates within one-carbon metabolism; tetrahydrofolate interconversion. This Ureaplasma parvum serovar 3 (strain ATCC 700970) protein is Formate--tetrahydrofolate ligase.